The sequence spans 283 residues: Large ribosomal subunit protein uL2 (283 aa).

A disordered region spans residues 215-283 (RHKGIRPTVR…IRGRKKRINN (69 aa)). Basic residues predominate over residues 274-283 (IRGRKKRINN).

Belongs to the universal ribosomal protein uL2 family. Part of the 50S ribosomal subunit. Forms a bridge to the 30S subunit in the 70S ribosome.

Functionally, one of the primary rRNA binding proteins. Required for association of the 30S and 50S subunits to form the 70S ribosome, for tRNA binding and peptide bond formation. It has been suggested to have peptidyltransferase activity; this is somewhat controversial. Makes several contacts with the 16S rRNA in the 70S ribosome. The sequence is that of Large ribosomal subunit protein uL2 from Mycoplasma mobile (strain ATCC 43663 / 163K / NCTC 11711) (Mesomycoplasma mobile).